The chain runs to 243 residues: Uridylate kinase (243 aa).

Lysine 15–glycine 18 contacts ATP. Glycine 57 contacts UMP. ATP contacts are provided by glycine 58 and arginine 62. Residues aspartate 77 and threonine 138–threonine 145 contribute to the UMP site. Positions 165, 171, and 174 each coordinate ATP.

The protein belongs to the UMP kinase family. Homohexamer.

The protein localises to the cytoplasm. It catalyses the reaction UMP + ATP = UDP + ADP. It participates in pyrimidine metabolism; CTP biosynthesis via de novo pathway; UDP from UMP (UMPK route): step 1/1. Its activity is regulated as follows. Inhibited by UTP. Functionally, catalyzes the reversible phosphorylation of UMP to UDP. The polypeptide is Uridylate kinase (Blochmanniella floridana).